A 1188-amino-acid chain; its full sequence is DNA-directed RNA polymerase subunit beta (1188 aa).

This sequence belongs to the RNA polymerase beta chain family. As to quaternary structure, the RNAP catalytic core consists of 2 alpha, 1 beta, 1 beta' and 1 omega subunit. When a sigma factor is associated with the core the holoenzyme is formed, which can initiate transcription.

The catalysed reaction is RNA(n) + a ribonucleoside 5'-triphosphate = RNA(n+1) + diphosphate. DNA-dependent RNA polymerase catalyzes the transcription of DNA into RNA using the four ribonucleoside triphosphates as substrates. The chain is DNA-directed RNA polymerase subunit beta from Streptococcus sanguinis (strain SK36).